Consider the following 264-residue polypeptide: 5'-nucleotidase SurE (264 aa).

Residues aspartate 10, aspartate 11, serine 43, and asparagine 99 each contribute to the a divalent metal cation site.

It belongs to the SurE nucleotidase family. The cofactor is a divalent metal cation.

The protein localises to the cytoplasm. It carries out the reaction a ribonucleoside 5'-phosphate + H2O = a ribonucleoside + phosphate. In terms of biological role, nucleotidase that shows phosphatase activity on nucleoside 5'-monophosphates. The protein is 5'-nucleotidase SurE of Methanococcus maripaludis (strain C7 / ATCC BAA-1331).